A 201-amino-acid polypeptide reads, in one-letter code: MNELIYFDRKKRLESILNHIKKLDYDDLRQIKKAILQQEFELDFNSCIPIIFETKIKTMKYKSSHDNPNWEYSDGIKCKFKMEFDNDCSIDLYCEYTTYYDGGDLEYTDIDNNRSININIGQKTYTIDFDADNYQTIFVINNDALKLLDSLSIDKSDSNKKCLGILIYNIVGITKPEDYHESFDIMSCDNFDDIVFIYEPY.

Belongs to the mimivirus L885/R898 family.

This is an uncharacterized protein from Acanthamoeba polyphaga (Amoeba).